The primary structure comprises 80 residues: Large ribosomal subunit protein bL31B (80 aa).

This sequence belongs to the bacterial ribosomal protein bL31 family. Type B subfamily. As to quaternary structure, part of the 50S ribosomal subunit.

In Exiguobacterium sp. (strain ATCC BAA-1283 / AT1b), this protein is Large ribosomal subunit protein bL31B.